We begin with the raw amino-acid sequence, 597 residues long: Arginine--tRNA ligase (597 aa).

The 'HIGH' region motif lies at 138–148; it reads ANPTGPMHVGH.

This sequence belongs to the class-I aminoacyl-tRNA synthetase family. Monomer.

The protein localises to the cytoplasm. The enzyme catalyses tRNA(Arg) + L-arginine + ATP = L-arginyl-tRNA(Arg) + AMP + diphosphate. The sequence is that of Arginine--tRNA ligase from Nitrobacter winogradskyi (strain ATCC 25391 / DSM 10237 / CIP 104748 / NCIMB 11846 / Nb-255).